The primary structure comprises 350 residues: Anthranilate phosphoribosyltransferase (350 aa).

Residues Gly93, 96–97 (GD), Thr101, 103–106 (NIST), 121–129 (KHGNRSASG), and Ser133 each bind 5-phospho-alpha-D-ribose 1-diphosphate. Anthranilate is bound at residue Gly93. Position 105 (Ser105) interacts with Mg(2+). An anthranilate-binding site is contributed by Asn124. Arg179 contributes to the anthranilate binding site. The Mg(2+) site is built by Asp238 and Glu239.

It belongs to the anthranilate phosphoribosyltransferase family. As to quaternary structure, homodimer. It depends on Mg(2+) as a cofactor.

It catalyses the reaction N-(5-phospho-beta-D-ribosyl)anthranilate + diphosphate = 5-phospho-alpha-D-ribose 1-diphosphate + anthranilate. The protein operates within amino-acid biosynthesis; L-tryptophan biosynthesis; L-tryptophan from chorismate: step 2/5. Its function is as follows. Catalyzes the transfer of the phosphoribosyl group of 5-phosphorylribose-1-pyrophosphate (PRPP) to anthranilate to yield N-(5'-phosphoribosyl)-anthranilate (PRA). The chain is Anthranilate phosphoribosyltransferase from Parasynechococcus marenigrum (strain WH8102).